The following is a 93-amino-acid chain: UPF0358 protein lin1058 (93 aa).

It belongs to the UPF0358 family.

This Listeria innocua serovar 6a (strain ATCC BAA-680 / CLIP 11262) protein is UPF0358 protein lin1058.